The primary structure comprises 496 residues: Guanosine-5'-triphosphate,3'-diphosphate pyrophosphatase (496 aa).

It belongs to the GppA/Ppx family. GppA subfamily.

It catalyses the reaction guanosine 3'-diphosphate 5'-triphosphate + H2O = guanosine 3',5'-bis(diphosphate) + phosphate + H(+). Its pathway is purine metabolism; ppGpp biosynthesis; ppGpp from GTP: step 2/2. Catalyzes the conversion of pppGpp to ppGpp. Guanosine pentaphosphate (pppGpp) is a cytoplasmic signaling molecule which together with ppGpp controls the 'stringent response', an adaptive process that allows bacteria to respond to amino acid starvation, resulting in the coordinated regulation of numerous cellular activities. The chain is Guanosine-5'-triphosphate,3'-diphosphate pyrophosphatase from Aeromonas salmonicida (strain A449).